The following is a 253-amino-acid chain: LexA repressor (253 aa).

The segment at 1–34 (MAIEKKPAGARGSRGSRTVKTLPNGKPDPASLSD) is disordered. Positions 56–76 (IREIGDAAGLQSTSSVAYQLK) form a DNA-binding region, H-T-H motif. Residues 82-106 (GFLRRDPNKPRAVDVRHLPETESRS) show a composition bias toward basic and acidic residues. The disordered stretch occupies residues 82–127 (GFLRRDPNKPRAVDVRHLPETESRSSKAATQAKSKAPQAGAHDPEL). Positions 107–120 (SKAATQAKSKAPQA) are enriched in low complexity. Catalysis depends on for autocatalytic cleavage activity residues Ser-177 and Lys-214.

This sequence belongs to the peptidase S24 family. In terms of assembly, homodimer.

The catalysed reaction is Hydrolysis of Ala-|-Gly bond in repressor LexA.. Its function is as follows. Represses a number of genes involved in the response to DNA damage (SOS response), including recA and lexA. In the presence of single-stranded DNA, RecA interacts with LexA causing an autocatalytic cleavage which disrupts the DNA-binding part of LexA, leading to derepression of the SOS regulon and eventually DNA repair. In Corynebacterium glutamicum (strain R), this protein is LexA repressor.